Here is a 149-residue protein sequence, read N- to C-terminus: Deoxyuridine 5'-triphosphate nucleotidohydrolase (149 aa).

Substrate contacts are provided by residues 68-70 (RSG), N81, 85-87 (TID), and K95.

It belongs to the dUTPase family. Requires Mg(2+) as cofactor.

It carries out the reaction dUTP + H2O = dUMP + diphosphate + H(+). It functions in the pathway pyrimidine metabolism; dUMP biosynthesis; dUMP from dCTP (dUTP route): step 2/2. In terms of biological role, this enzyme is involved in nucleotide metabolism: it produces dUMP, the immediate precursor of thymidine nucleotides and it decreases the intracellular concentration of dUTP so that uracil cannot be incorporated into DNA. The sequence is that of Deoxyuridine 5'-triphosphate nucleotidohydrolase from Bdellovibrio bacteriovorus (strain ATCC 15356 / DSM 50701 / NCIMB 9529 / HD100).